Reading from the N-terminus, the 118-residue chain is UPF0342 protein ABC1519 (118 aa).

The protein belongs to the UPF0342 family.

In Shouchella clausii (strain KSM-K16) (Alkalihalobacillus clausii), this protein is UPF0342 protein ABC1519.